The chain runs to 117 residues: Large ribosomal subunit protein uL22 (117 aa).

It belongs to the universal ribosomal protein uL22 family. In terms of assembly, part of the 50S ribosomal subunit.

In terms of biological role, this protein binds specifically to 23S rRNA; its binding is stimulated by other ribosomal proteins, e.g. L4, L17, and L20. It is important during the early stages of 50S assembly. It makes multiple contacts with different domains of the 23S rRNA in the assembled 50S subunit and ribosome. Functionally, the globular domain of the protein is located near the polypeptide exit tunnel on the outside of the subunit, while an extended beta-hairpin is found that lines the wall of the exit tunnel in the center of the 70S ribosome. In Lactobacillus delbrueckii subsp. bulgaricus (strain ATCC 11842 / DSM 20081 / BCRC 10696 / JCM 1002 / NBRC 13953 / NCIMB 11778 / NCTC 12712 / WDCM 00102 / Lb 14), this protein is Large ribosomal subunit protein uL22.